The chain runs to 131 residues: Transcription antitermination protein NusB (131 aa).

Belongs to the NusB family.

Its function is as follows. Involved in transcription antitermination. Required for transcription of ribosomal RNA (rRNA) genes. Binds specifically to the boxA antiterminator sequence of the ribosomal RNA (rrn) operons. The chain is Transcription antitermination protein NusB from Campylobacter concisus (strain 13826).